Reading from the N-terminus, the 119-residue chain is NADH-quinone oxidoreductase subunit A (119 aa).

Helical transmembrane passes span 7–27 (FPVL…VSIG), 63–83 (LVAI…PWGV), and 88–108 (IGWP…LGFA).

This sequence belongs to the complex I subunit 3 family. NDH-1 is composed of 14 different subunits. Subunits NuoA, H, J, K, L, M, N constitute the membrane sector of the complex.

It is found in the cell inner membrane. It catalyses the reaction a quinone + NADH + 5 H(+)(in) = a quinol + NAD(+) + 4 H(+)(out). NDH-1 shuttles electrons from NADH, via FMN and iron-sulfur (Fe-S) centers, to quinones in the respiratory chain. The immediate electron acceptor for the enzyme in this species is believed to be ubiquinone. Couples the redox reaction to proton translocation (for every two electrons transferred, four hydrogen ions are translocated across the cytoplasmic membrane), and thus conserves the redox energy in a proton gradient. This chain is NADH-quinone oxidoreductase subunit A, found in Paraburkholderia xenovorans (strain LB400).